The chain runs to 444 residues: Protein CPn_0808/CP_1063/CPj0808/CpB0837 (444 aa).

Over residues 1–13 the composition is skewed to polar residues; the sequence is MTSGVSGSSSQDP. Residues 1–124 form a disordered region; it reads MTSGVSGSSS…NNYDSPSLPT (124 aa). Over residues 15-24 the composition is skewed to low complexity; the sequence is LAAQLAQSSQ. The segment covering 25 to 42 has biased composition (polar residues); sequence KAGNAQSGHDTKNVTKQG. The segment covering 77–86 has biased composition (basic and acidic residues); the sequence is SKGEKSEKSG. A compositionally biased stretch (low complexity) spans 88 to 103; sequence SKSSTSVASASETATA. Positions 113–124 are enriched in polar residues; the sequence is RQNNYDSPSLPT.

The protein belongs to the chlamydial CPn_0808/CT_579/TC_0868 family.

The polypeptide is Protein CPn_0808/CP_1063/CPj0808/CpB0837 (Chlamydia pneumoniae (Chlamydophila pneumoniae)).